The chain runs to 193 residues: Thymidine kinase (193 aa).

ATP-binding positions include 15–22 and 87–90; these read GCMYSGKT and DELH. Residue Glu88 is the Proton acceptor of the active site. Zn(2+)-binding residues include Cys147, Cys150, Cys185, and Cys188.

This sequence belongs to the thymidine kinase family. As to quaternary structure, homotetramer.

The protein resides in the cytoplasm. The catalysed reaction is thymidine + ATP = dTMP + ADP + H(+). The sequence is that of Thymidine kinase from Chloroflexus aurantiacus (strain ATCC 29366 / DSM 635 / J-10-fl).